The chain runs to 224 residues: Putative homeobox protein R749 (224 aa).

Residues 139-162 (KTKTIKKSTSEKKTSPKKKTTSQQ) form a disordered region. Positions 161–220 (QQIKRVRLSDEERNILESQYSKNNFPSPEIRDELAKKIGKTPRQVQIWFQNKRCKDRKNL) form a DNA-binding region, homeobox.

It localises to the host nucleus. This chain is Putative homeobox protein R749, found in Acanthamoeba polyphaga mimivirus (APMV).